The following is a 247-amino-acid chain: Carboxy-S-adenosyl-L-methionine synthase (247 aa).

Residues tyrosine 40, 65–67 (GSS), 90–91 (DN), 122–123 (DI), asparagine 137, and arginine 204 each bind S-adenosyl-L-methionine.

This sequence belongs to the class I-like SAM-binding methyltransferase superfamily. Cx-SAM synthase family. In terms of assembly, homodimer.

The catalysed reaction is prephenate + S-adenosyl-L-methionine = carboxy-S-adenosyl-L-methionine + 3-phenylpyruvate + H2O. Its function is as follows. Catalyzes the conversion of S-adenosyl-L-methionine (SAM) to carboxy-S-adenosyl-L-methionine (Cx-SAM). The sequence is that of Carboxy-S-adenosyl-L-methionine synthase from Pseudomonas fluorescens (strain ATCC BAA-477 / NRRL B-23932 / Pf-5).